Consider the following 338-residue polypeptide: (-)-alpha-amorphene synthase ((2E,6E)-farnesyl diphosphate cyclizing) (338 aa).

Mg(2+)-binding residues include D105 and E109. Residues 105-109 (DDRAE) carry the DDXXE motif motif. Residue R196 participates in substrate binding. Residue S246 coordinates Mg(2+). K249 serves as a coordination point for substrate. Mg(2+) is bound at residue E250. Position 327-328 (327-328 (RY)) interacts with substrate.

This sequence belongs to the terpene synthase family. It depends on Mg(2+) as a cofactor.

The catalysed reaction is (2E,6E)-farnesyl diphosphate = (-)-alpha-amorphene + diphosphate. It participates in secondary metabolite biosynthesis; terpenoid biosynthesis. Functionally, catalyzes the conversion of (2E,6E)-farnesyl diphosphate (FPP) to yield the bicyclic sesquiterpene (1R,6S,7S)-(-)-alpha-amorphene via a probable 1,6-cyclization, which could involve the abstraction of the pyrophosphate from FPP to yield a (R)-bisabolyl cation. The only accepted substrate is (2E,6E)-farnesyl diphosphate (FPP). The sequence is that of (-)-alpha-amorphene synthase ((2E,6E)-farnesyl diphosphate cyclizing) from Streptomyces viridochromogenes (strain DSM 40736 / JCM 4977 / BCRC 1201 / Tue 494).